The chain runs to 320 residues: GPI-specific phospholipase A2-like PGAP3 (320 aa).

The N-terminal stretch at 1-23 (MAKRTAPLLLLTLAVGLAGGSQG) is a signal peptide. Residues 24–98 (DREPVYRDCV…QFHGKWPFSR (75 aa)) lie on the Lumenal side of the membrane. Residue Asn40 is glycosylated (N-linked (GlcNAc...) asparagine). The chain crosses the membrane as a helical span at residues 99-119 (FLFIQEPASAVASLLNGLASL). At 120-135 (VMLCRYRASVPASSPM) the chain is on the cytoplasmic side. The helical transmembrane segment at 136–156 (YHTCMAFAWVSLNAWFWSTVF) threads the bilayer. Residues 157-169 (HTRDTDLTEKMDY) lie on the Lumenal side of the membrane. Residues 170–190 (FCASAVILHSVYLCCVRTVGL) form a helical membrane-spanning segment. Residues 191–198 (QHPSVASA) lie on the Cytoplasmic side of the membrane. Residues 199-219 (FGALLLLLLTGHISYLSLVHF) traverse the membrane as a helical segment. At 220–223 (DYGY) the chain is on the lumenal side. The helical transmembrane segment at 224 to 244 (NMMANVAIGLVNLAWWLVWCL) threads the bilayer. Over 245 to 257 (RNRQRLPHTRRCM) the chain is Cytoplasmic. A helical membrane pass occupies residues 258–278 (VVVVLLQGLSLLELLDFPPLF). Position 279 (Trp279) is a topological domain, lumenal. Residues 280-299 (VLDAHAIWHISTIPVHTLFF) traverse the membrane as a helical segment. Topologically, residues 300–320 (RFLEDDSLYLLKESGAMFKLD) are cytoplasmic.

The protein belongs to the PGAP3 family.

It localises to the golgi apparatus membrane. In terms of biological role, involved in the fatty acid remodeling steps of GPI-anchor maturation where the unsaturated acyl chain at sn-2 of inositol phosphate is replaced by a saturated stearoyl chain. May catalyze the first step of the fatty acid remodeling, by removing the unsaturated acyl chain at sn-2 of inositol phosphate, generating a lyso-GPI intermediate. The fatty acid remodeling steps is critical for the integration of GPI-APs into lipid rafts. This is GPI-specific phospholipase A2-like PGAP3 from Mus musculus (Mouse).